The chain runs to 365 residues: Uroporphyrinogen decarboxylase (365 aa).

Substrate contacts are provided by residues 27–31, Asp-77, Tyr-154, Thr-209, and His-327; that span reads RQAGR.

It belongs to the uroporphyrinogen decarboxylase family. In terms of assembly, homodimer.

The protein localises to the cytoplasm. The catalysed reaction is uroporphyrinogen III + 4 H(+) = coproporphyrinogen III + 4 CO2. It participates in porphyrin-containing compound metabolism; protoporphyrin-IX biosynthesis; coproporphyrinogen-III from 5-aminolevulinate: step 4/4. Functionally, catalyzes the decarboxylation of four acetate groups of uroporphyrinogen-III to yield coproporphyrinogen-III. In Nitrosospira multiformis (strain ATCC 25196 / NCIMB 11849 / C 71), this protein is Uroporphyrinogen decarboxylase.